The following is a 308-amino-acid chain: ADP-L-glycero-D-manno-heptose-6-epimerase (308 aa).

NADP(+) is bound by residues 10–11, 31–32, lysine 38, lysine 53, 75–79, and asparagine 92; these read FI, DN, and EGACS. Tyrosine 139 acts as the Proton acceptor in catalysis. Lysine 143 contacts NADP(+). Asparagine 168 is a binding site for substrate. 2 residues coordinate NADP(+): valine 169 and lysine 177. Lysine 177 functions as the Proton acceptor in the catalytic mechanism. Substrate contacts are provided by residues serine 179, histidine 186, 200-203, arginine 208, and tyrosine 271; that span reads FAGS.

Belongs to the NAD(P)-dependent epimerase/dehydratase family. HldD subfamily. In terms of assembly, homopentamer. It depends on NADP(+) as a cofactor.

The catalysed reaction is ADP-D-glycero-beta-D-manno-heptose = ADP-L-glycero-beta-D-manno-heptose. It functions in the pathway nucleotide-sugar biosynthesis; ADP-L-glycero-beta-D-manno-heptose biosynthesis; ADP-L-glycero-beta-D-manno-heptose from D-glycero-beta-D-manno-heptose 7-phosphate: step 4/4. Its function is as follows. Catalyzes the interconversion between ADP-D-glycero-beta-D-manno-heptose and ADP-L-glycero-beta-D-manno-heptose via an epimerization at carbon 6 of the heptose. This chain is ADP-L-glycero-D-manno-heptose-6-epimerase, found in Actinobacillus succinogenes (strain ATCC 55618 / DSM 22257 / CCUG 43843 / 130Z).